Consider the following 362-residue polypeptide: MRVTAPRTLLLLLSAALALTETWAGSHSMRYFDTAVSRPGRGEPRFITVGYVDDTQFVRFDSDAASPRMEPRAPWIEQEGPEYWDRETQTSKAQAQTDRENLRIALRYYNQSEAGSHTIQWMYGCDMGPDGRLLRGYSQSAYDGKDYIALNEDLSSWTAADTAAQITQRKWEAAREAEQLRAYLEGTCVEWLRRYLENGRETLQRADTPKTHVTHHPISDHEATLRCWALGFYPAEITLTWQRDGEDQTQDTELVETRPAGDGTFQKWAAVVVPSGEEERYTCHVQHEGLPKPLTLRWEPSSQSTIPIVGIVAGLAVLAVVVIGAVVTAVICRRKSSGGKGGSYSQAASSDSAQGSDVSLTA.

An N-terminal signal peptide occupies residues 1-24 (MRVTAPRTLLLLLSAALALTETWA). Residues 25-114 (GSHSMRYFDT…ALRYYNQSEA (90 aa)) form an alpha-1 region. At 25-308 (GSHSMRYFDT…EPSSQSTIPI (284 aa)) the chain is on the extracellular side. A glycan (N-linked (GlcNAc...) asparagine) is linked at Asn110. The tract at residues 115-206 (GSHTIQWMYG…ENGRETLQRA (92 aa)) is alpha-2. 2 disulfides stabilise this stretch: Cys125-Cys188 and Cys227-Cys283. Residues 207-298 (DTPKTHVTHH…GLPKPLTLRW (92 aa)) form an alpha-3 region. The Ig-like C1-type domain occupies 209–295 (PKTHVTHHPI…QHEGLPKPLT (87 aa)). Residues 299 to 308 (EPSSQSTIPI) form a connecting peptide region. A helical transmembrane segment spans residues 309-332 (VGIVAGLAVLAVVVIGAVVTAVIC). The Cytoplasmic portion of the chain corresponds to 333-362 (RRKSSGGKGGSYSQAASSDSAQGSDVSLTA). Positions 335-362 (KSSGGKGGSYSQAASSDSAQGSDVSLTA) are disordered. The segment covering 343–362 (SYSQAASSDSAQGSDVSLTA) has biased composition (low complexity).

This sequence belongs to the MHC class I family. In terms of assembly, heterodimer of an alpha chain and a beta chain (beta-2-microglobulin).

It is found in the membrane. In terms of biological role, involved in the presentation of foreign antigens to the immune system. This is Class I histocompatibility antigen, Gogo-B*0103 alpha chain from Gorilla gorilla gorilla (Western lowland gorilla).